An 88-amino-acid polypeptide reads, in one-letter code: Small ribosomal subunit protein uS15 (88 aa).

The segment covering 1–12 (MITQEEQQKIID) has biased composition (basic and acidic residues). Positions 1–24 (MITQEEQQKIIDRFGNGPNDTGTP) are disordered.

Belongs to the universal ribosomal protein uS15 family. In terms of assembly, part of the 30S ribosomal subunit. Forms a bridge to the 50S subunit in the 70S ribosome, contacting the 23S rRNA.

One of the primary rRNA binding proteins, it binds directly to 16S rRNA where it helps nucleate assembly of the platform of the 30S subunit by binding and bridging several RNA helices of the 16S rRNA. Functionally, forms an intersubunit bridge (bridge B4) with the 23S rRNA of the 50S subunit in the ribosome. The chain is Small ribosomal subunit protein uS15 from Salinibacter ruber (strain DSM 13855 / M31).